The chain runs to 302 residues: MEPKVLSIQSWVCHGYVGNKCAVFALQHLGIEVDPINSVHLSNNTAYPTWKGESLTPNKLGDLFQGLEDNHLTSNYTHVLTGYNNSVQTLHTVLKIVKKLKSENPNLIYVCDPVLGDNNELYVPEDLVEVYKNEVIPNADYIFPNQTEVEFLTGIKIKNDQDALKAIDQFHKMGVKNVVITSLFFDTNPNDIIVIGSTINDDDNNNKYNQFKIKVGPKFNDYYTGTGDLLSSLLLGWSIREPTDLSLVCEKAISILYNIINETHNSKKSIPSNKEKQYYELRLVQSRKFIENSEIRFKSEKL.

Residues Ser10, Thr45, and Tyr122 each contribute to the substrate site. ATP contacts are provided by residues 181 to 182 and 215 to 227; these read TS and VGPKFNDYYTGTG. A substrate-binding site is contributed by Asp228.

The protein belongs to the pyridoxine kinase family. Homodimer. A divalent metal cation serves as cofactor.

The protein localises to the cytoplasm. The enzyme catalyses pyridoxal + ATP = pyridoxal 5'-phosphate + ADP + H(+). It participates in cofactor metabolism; pyridoxal 5'-phosphate salvage; pyridoxal 5'-phosphate from pyridoxal: step 1/1. Required for synthesis of pyridoxal-5-phosphate from vitamin B6. The protein is Pyridoxal kinase (pykA) of Dictyostelium discoideum (Social amoeba).